We begin with the raw amino-acid sequence, 390 residues long: Dual-specificity RNA methyltransferase RlmN (390 aa).

Glu-110 serves as the catalytic Proton acceptor. A Radical SAM core domain is found at 116 to 355 (EADRATLCVS…VIIRKTRGDD (240 aa)). Cys-123 and Cys-360 are oxidised to a cystine. Cys-130, Cys-134, and Cys-137 together coordinate [4Fe-4S] cluster. S-adenosyl-L-methionine is bound by residues 184–185 (GE), Ser-216, 238–240 (SLH), and Asn-317. The active-site S-methylcysteine intermediate is Cys-360.

It belongs to the radical SAM superfamily. RlmN family. It depends on [4Fe-4S] cluster as a cofactor.

The protein localises to the cytoplasm. The catalysed reaction is adenosine(2503) in 23S rRNA + 2 reduced [2Fe-2S]-[ferredoxin] + 2 S-adenosyl-L-methionine = 2-methyladenosine(2503) in 23S rRNA + 5'-deoxyadenosine + L-methionine + 2 oxidized [2Fe-2S]-[ferredoxin] + S-adenosyl-L-homocysteine. It catalyses the reaction adenosine(37) in tRNA + 2 reduced [2Fe-2S]-[ferredoxin] + 2 S-adenosyl-L-methionine = 2-methyladenosine(37) in tRNA + 5'-deoxyadenosine + L-methionine + 2 oxidized [2Fe-2S]-[ferredoxin] + S-adenosyl-L-homocysteine. In terms of biological role, specifically methylates position 2 of adenine 2503 in 23S rRNA and position 2 of adenine 37 in tRNAs. m2A2503 modification seems to play a crucial role in the proofreading step occurring at the peptidyl transferase center and thus would serve to optimize ribosomal fidelity. In Haemophilus influenzae (strain ATCC 51907 / DSM 11121 / KW20 / Rd), this protein is Dual-specificity RNA methyltransferase RlmN.